The primary structure comprises 143 residues: 3-hydroxyacyl-[acyl-carrier-protein] dehydratase FabZ (143 aa).

His-48 is an active-site residue.

This sequence belongs to the thioester dehydratase family. FabZ subfamily.

The protein resides in the cytoplasm. The enzyme catalyses a (3R)-hydroxyacyl-[ACP] = a (2E)-enoyl-[ACP] + H2O. Involved in unsaturated fatty acids biosynthesis. Catalyzes the dehydration of short chain beta-hydroxyacyl-ACPs and long chain saturated and unsaturated beta-hydroxyacyl-ACPs. This is 3-hydroxyacyl-[acyl-carrier-protein] dehydratase FabZ from Roseiflexus sp. (strain RS-1).